The following is a 136-amino-acid chain: Transcription antitermination protein NusB (136 aa).

Belongs to the NusB family.

Functionally, involved in transcription antitermination. Required for transcription of ribosomal RNA (rRNA) genes. Binds specifically to the boxA antiterminator sequence of the ribosomal RNA (rrn) operons. In Pseudarthrobacter chlorophenolicus (strain ATCC 700700 / DSM 12829 / CIP 107037 / JCM 12360 / KCTC 9906 / NCIMB 13794 / A6) (Arthrobacter chlorophenolicus), this protein is Transcription antitermination protein NusB.